A 356-amino-acid chain; its full sequence is tRNA-specific 2-thiouridylase MnmA (356 aa).

ATP-binding positions include 8–15 (GMSGGVDS) and Met34. Cys103 functions as the Nucleophile in the catalytic mechanism. An intrachain disulfide couples Cys103 to Cys199. Position 127 (Gly127) interacts with ATP. An interaction with tRNA region spans residues 149 to 151 (KDQ). The Cysteine persulfide intermediate role is filled by Cys199. Residues 305-306 (RY) form an interaction with tRNA region.

This sequence belongs to the MnmA/TRMU family.

Its subcellular location is the cytoplasm. The enzyme catalyses S-sulfanyl-L-cysteinyl-[protein] + uridine(34) in tRNA + AH2 + ATP = 2-thiouridine(34) in tRNA + L-cysteinyl-[protein] + A + AMP + diphosphate + H(+). In terms of biological role, catalyzes the 2-thiolation of uridine at the wobble position (U34) of tRNA, leading to the formation of s(2)U34. In Clostridium kluyveri (strain ATCC 8527 / DSM 555 / NBRC 12016 / NCIMB 10680 / K1), this protein is tRNA-specific 2-thiouridylase MnmA.